The primary structure comprises 327 residues: 4-hydroxy-2-oxoglutarate aldolase, mitochondrial (327 aa).

Residues 1 to 25 (MLVPRVWSSVRLGLSRVLSRTLRGW) constitute a mitochondrion transit peptide. 77–78 (SN) serves as a coordination point for substrate. The active-site Schiff-base intermediate with substrate is Lys196. Positions 198 and 222 each coordinate substrate.

It belongs to the DapA family. Homotetramer.

It localises to the mitochondrion. It carries out the reaction (4S)-4-hydroxy-2-oxoglutarate = glyoxylate + pyruvate. The catalysed reaction is (4R)-4-hydroxy-2-oxoglutarate = glyoxylate + pyruvate. Inhibited by divalent cations. Its function is as follows. Catalyzes the final step in the metabolic pathway of hydroxyproline. This is 4-hydroxy-2-oxoglutarate aldolase, mitochondrial (HOGA1) from Bos taurus (Bovine).